An 825-amino-acid chain; its full sequence is MASSHQGNGTVPNSQTDAPPDSSTKRRWRRNRIACDSCHARRVRCDRQFPCSRCLRSEITCEFTRERRKRGRIARSKLAEMAKNKMETSETPAPAKTMNGIPAPAGTEIPGHVSPASTFHHRSPPANAPTVSAPSVDGRRSQTDPQLPVRRPEIGGNVTEEWLAGTHVSPGSYEFLNGPAFGEGLGPFPHMFDVWNGVDLAAYSAGTSQGSKATNAPSTSTAPLKYPVLQPLMPFVEATLPRKLVFDLLDLYFTSAFSTHMHPVSFLSKDAPRPSSPALLSSMLWVAALDDRAFSLPISPPQRKRICQFLCALTIRLLRPLIHVSFKDQGGAAAAVAAAAAAATNNPAFAGVGQDLPPTTVHHPFEGGGDDRGLVGPAGSLDDVITYIHVASIISSSEQKAASMRWWHAAFTLARELKLNQEIEVMPNGDSQVEGSSPPFGYSLPGWDGADPGPVFNYSNPTRSSLNCVCDRQDQNTITEEHREERRRTWWLLYIMDRHLALCYNRPLALLDAESEDLLLPLDEASWQSGIIHSNSPKSDGPQCLLSADKNKRRLFPNFICHDHSVFGFFLPLMTITGELIDLNQARNHPMLGMRLNGKDAWNVHVSEVLRQLEIYKASLTTFAATTSDPEAPLSAYAHAQSEHLPAEPSLSQAYAWHTQTVISYASYLVHVLHILLVGKWDPVSLIEDKDFWTSSPAFASTISHALDAADSVDQILRYDPDISFMPYFFGIQLLQGSFLLLLIVERLQKEAGEGILNACEVMIRATESCVVTLNTEYQRNFRQVMRSAVAQARGRPVNHSEIRHRRKAVLALYRWTRKGTGLAL.

The segment covering 1–17 (MASSHQGNGTVPNSQTD) has biased composition (polar residues). A disordered region spans residues 1 to 28 (MASSHQGNGTVPNSQTDAPPDSSTKRRW). The zn(2)-C6 fungal-type DNA-binding region spans 35–61 (CDSCHARRVRCDRQFPCSRCLRSEITC). The tract at residues 117–152 (STFHHRSPPANAPTVSAPSVDGRRSQTDPQLPVRRP) is disordered.

The protein belongs to the xlnR/xlr1 family. araR subfamily.

It localises to the nucleus. Its function is as follows. Transcriptional activator of the arabinanolytic system. Involved in the regulation of extracellular arabinanolytic genes and in the regulation of the intracellular activities of L-arabinose catabolic genes in the pentose catabolic pathway (PCP) in response to the presence of L-arabinose. This is Arabinolytic transcriptional activator araR from Emericella nidulans (strain FGSC A4 / ATCC 38163 / CBS 112.46 / NRRL 194 / M139) (Aspergillus nidulans).